The sequence spans 286 residues: Pantothenate synthetase (286 aa).

ATP is bound at residue 31-38; it reads MGALHDGH. Histidine 38 acts as the Proton donor in catalysis. Glutamine 62 contacts (R)-pantoate. Position 62 (glutamine 62) interacts with beta-alanine. An ATP-binding site is contributed by 148-151; it reads GKKD. Glutamine 154 contributes to the (R)-pantoate binding site. Residues valine 177 and 185 to 188 each bind ATP; that span reads KSSR.

Belongs to the pantothenate synthetase family. Homodimer.

It localises to the cytoplasm. It carries out the reaction (R)-pantoate + beta-alanine + ATP = (R)-pantothenate + AMP + diphosphate + H(+). It functions in the pathway cofactor biosynthesis; (R)-pantothenate biosynthesis; (R)-pantothenate from (R)-pantoate and beta-alanine: step 1/1. Functionally, catalyzes the condensation of pantoate with beta-alanine in an ATP-dependent reaction via a pantoyl-adenylate intermediate. This chain is Pantothenate synthetase, found in Staphylococcus carnosus (strain TM300).